The sequence spans 563 residues: BOS complex subunit NCLN (563 aa).

Positions 1–42 are cleaved as a signal peptide; that stretch reads MLEEAGEVLENVLKASCLPLGFIVFLPAVLLLVAPPLPAADA. Over 43–522 the chain is Lumenal; the sequence is AHEFTVYRMQ…VMNAYRVKPA (480 aa). 2 N-linked (GlcNAc...) asparagine glycosylation sites follow: N241 and N428. The helical transmembrane segment at 523–543 threads the bilayer; it reads IFDLLLALCIGAYLGMAYTAV. At 544-563 the chain is on the cytoplasmic side; it reads QHFHVLYKTVQRLLLKAKAQ.

Belongs to the nicastrin family. Component of the back of Sec61 (BOS) complex, composed of NCLN/Nicalin, NOMO1 and TMEM147. The BOS complex is part of the multi-pass translocon (MPT) complex, composed of three subcomplexes, the GEL complex (composed of RAB5IF/OPTI and TMCO1), the BOS complex (composed of NCLN/Nicalin, NOMO1 and TMEM147) and the PAT complex (composed of WDR83OS/Asterix and CCDC47). The MPT complex associates with the SEC61 complex.

Its subcellular location is the endoplasmic reticulum membrane. Functionally, component of the multi-pass translocon (MPT) complex that mediates insertion of multi-pass membrane proteins into the lipid bilayer of membranes. The MPT complex takes over after the SEC61 complex: following membrane insertion of the first few transmembrane segments of proteins by the SEC61 complex, the MPT complex occludes the lateral gate of the SEC61 complex to promote insertion of subsequent transmembrane regions. May antagonize Nodal signaling and subsequent organization of axial structures during mesodermal patterning, via its interaction with NOMO. The polypeptide is BOS complex subunit NCLN (Ncln) (Rattus norvegicus (Rat)).